A 292-amino-acid polypeptide reads, in one-letter code: D-tagatose-1,6-bisphosphate aldolase subunit KbaY (292 aa).

The active-site Proton donor is the aspartate 82. Histidine 83 and histidine 180 together coordinate Zn(2+). Glycine 181 serves as a coordination point for dihydroxyacetone phosphate. Histidine 208 serves as a coordination point for Zn(2+). Dihydroxyacetone phosphate contacts are provided by residues 209-211 and 230-233; these read GAS and NVAT.

This sequence belongs to the class II fructose-bisphosphate aldolase family. TagBP aldolase KbaY subfamily. In terms of assembly, homotetramer. Forms a complex with KbaZ. It depends on Zn(2+) as a cofactor.

It catalyses the reaction D-tagatofuranose 1,6-bisphosphate = D-glyceraldehyde 3-phosphate + dihydroxyacetone phosphate. It functions in the pathway carbohydrate metabolism; D-tagatose 6-phosphate degradation; D-glyceraldehyde 3-phosphate and glycerone phosphate from D-tagatose 6-phosphate: step 2/2. Functionally, catalytic subunit of the tagatose-1,6-bisphosphate aldolase KbaYZ, which catalyzes the reversible aldol condensation of dihydroxyacetone phosphate (DHAP or glycerone-phosphate) with glyceraldehyde 3-phosphate (G3P) to produce tagatose 1,6-bisphosphate (TBP). Requires KbaZ subunit for full activity and stability. The chain is D-tagatose-1,6-bisphosphate aldolase subunit KbaY from Enterobacter sp. (strain 638).